The sequence spans 563 residues: DNA repair protein rhp7 (563 aa).

Positions methionine 1–aspartate 101 are disordered. Polar residues predominate over residues glutamate 39–glutamate 59. Over residues valine 78–lysine 90 the composition is skewed to basic residues.

This sequence belongs to the RAD7 family.

It is found in the nucleus. In terms of biological role, involved in global genome repair (GGR) via nucleotide excision repair (NER), in conjunction with rhp16, after UV irradiation. This Schizosaccharomyces pombe (strain 972 / ATCC 24843) (Fission yeast) protein is DNA repair protein rhp7 (rhp7).